The sequence spans 480 residues: REST corepressor 1 (480 aa).

Positions 1–105 (MPAMVEKGPE…GGGMRVGPQY (105 aa)) are disordered. Low complexity-rich tracts occupy residues 21–58 (AASA…AAAA) and 66–89 (SLAA…SGSS). The segment at 72–251 (PNGNSGSNSW…RHARKQKRER (180 aa)) is interaction with HDAC1. The region spanning 97–183 (GGMRVGPQYQ…KSLADLPNFT (87 aa)) is the ELM2 domain. Lysine 116 is covalently cross-linked (Glycyl lysine isopeptide (Lys-Gly) (interchain with G-Cter in SUMO2)). A Phosphoserine modification is found at serine 121. An SANT 1 domain is found at 184–235 (PFPDEWTVEDKVLFEQAFSFHGKTFHRIQQMLPDKSIASLVKFYYSWKKTRT). Residues 238-265 (SVMDRHARKQKREREESEDELEETNGSN) adopt a coiled-coil conformation. The interval 238–308 (SVMDRHARKQ…AKNRAKRKPP (71 aa)) is disordered. Serine 254 carries the post-translational modification Phosphoserine. The segment covering 272-282 (DPNKESKKEVP) has biased composition (basic and acidic residues). Positions 290 to 378 (VKKEKHSTQA…LPEVIQKCNA (89 aa)) are interaction with KDM1A. Lysine 291 participates in a covalent cross-link: Glycyl lysine isopeptide (Lys-Gly) (interchain with G-Cter in SUMO2). Residues 328 to 363 (ATTVLRQLDMELVSIKRQIQNIKQTNSALKEKLDGG) are a coiled coil. Positions 375–426 (KCNARWTTEEQLLAVQAIRKYGRDFQAISDVIGNKSVVQVKNFFVNYRRRFN) constitute an SANT 2 domain. Positions 436–466 (AEHGKDETNGPANQKPVKSPESSIKIPEEED) are disordered. Residue serine 454 is modified to Phosphoserine. Residue lysine 460 forms a Glycyl lysine isopeptide (Lys-Gly) (interchain with G-Cter in SUMO2) linkage.

Belongs to the CoREST family. Component of a BHC histone deacetylase complex that contains HDAC1, HDAC2, HMG20B/BRAF35, KDM1A, RCOR1/CoREST and PHF21A/BHC80. The BHC complex may also contain ZMYM2, ZNF217, ZMYM3, GSE1 and GTF2I. Interacts with REST. Interacts with the SMARCE1/BAF57, suggesting that the BHC complex may recruit the ATP-dependent chromatin-remodeling SWI-SNF complex. Interacts directly with GFI1 and GFI1B in a RCOR/GFI/KDM1A/HDAC complex. Interacts with INMS1. Interacts with SOX2. As to expression, expressed in the external germinal layer (EGL) and internal granular layer (IGL) of the cerebellum and in Purkinje cells (at protein level).

Its subcellular location is the nucleus. In terms of biological role, essential component of the BHC complex, a corepressor complex that represses transcription of neuron-specific genes in non-neuronal cells. The BHC complex is recruited at RE1/NRSE sites by REST and acts by deacetylating and demethylating specific sites on histones, thereby acting as a chromatin modifier. In the BHC complex, it serves as a molecular beacon for the recruitment of molecular machinery, including MeCP2 and SUV39H1, that imposes silencing across a chromosomal interval. Plays a central role in demethylation of Lys-4 of histone H3 by promoting demethylase activity of KDM1A on core histones and nucleosomal substrates. It also protects KDM1A from the proteasome. Component of a RCOR/GFI/KDM1A/HDAC complex that suppresses, via histone deacetylase (HDAC) recruitment, a number of genes implicated in multilineage blood cell development and controls hematopoietic differentiation. The sequence is that of REST corepressor 1 (Rcor1) from Mus musculus (Mouse).